The chain runs to 159 residues: Cyclic pyranopterin monophosphate synthase (159 aa).

Substrate-binding positions include Leu-75 to His-77 and Met-113 to Glu-114. Residue Asp-128 is part of the active site.

The protein belongs to the MoaC family. Homohexamer; trimer of dimers.

The catalysed reaction is (8S)-3',8-cyclo-7,8-dihydroguanosine 5'-triphosphate = cyclic pyranopterin phosphate + diphosphate. Its pathway is cofactor biosynthesis; molybdopterin biosynthesis. Functionally, catalyzes the conversion of (8S)-3',8-cyclo-7,8-dihydroguanosine 5'-triphosphate to cyclic pyranopterin monophosphate (cPMP). The chain is Cyclic pyranopterin monophosphate synthase from Cupriavidus metallidurans (strain ATCC 43123 / DSM 2839 / NBRC 102507 / CH34) (Ralstonia metallidurans).